The chain runs to 373 residues: tRNA-specific 2-thiouridylase MnmA (373 aa).

ATP contacts are provided by residues 12-19 and Met38; that span reads GMSGGVDS. Residues 98–100 form an interaction with target base in tRNA region; sequence NPD. Cys103 functions as the Nucleophile in the catalytic mechanism. Cys103 and Cys200 are disulfide-bonded. Gly127 contacts ATP. Residues 150–152 form an interaction with tRNA region; sequence KDQ. Cys200 acts as the Cysteine persulfide intermediate in catalysis. The interaction with tRNA stretch occupies residues 312–313; the sequence is RY.

This sequence belongs to the MnmA/TRMU family.

It localises to the cytoplasm. It catalyses the reaction S-sulfanyl-L-cysteinyl-[protein] + uridine(34) in tRNA + AH2 + ATP = 2-thiouridine(34) in tRNA + L-cysteinyl-[protein] + A + AMP + diphosphate + H(+). Catalyzes the 2-thiolation of uridine at the wobble position (U34) of tRNA, leading to the formation of s(2)U34. The polypeptide is tRNA-specific 2-thiouridylase MnmA (Streptococcus pneumoniae (strain ATCC 700669 / Spain 23F-1)).